The primary structure comprises 629 residues: MGQDHSVEARPPPTHEEVVRHLAGKFADKCYTPLEIYSLKDNFKSLADTVQDVKYLKEDTVARFLEIPDALRVTPVLFQSVSFLAAFPFLRDAPAVLGLEQLVIAITILTGRWKRVLKSPADRTKLLFKSLAVYDRKLSCATLTPVASPMAAEAKGASAGFAVDEAGDDDEAEDDGDDDLVLAAFESLDCVDAFRHGDAPPKIQGAMIPADNFVRLIMLLLLVAPLDPQERLSQYSDRLVGTELEDLHATAQCVVQAFLDVEEVPGLTWSRFRKILPVCCPFMFDAGFNALFSHFLFSKNIDFNKRKPTGSEEDRGEQPKLPQKATPSQSTLPQPLLPQAGSILNANILSQLSFFIPGDSLFRCLRLLYSGDEDGFSMGSFESKVFNWRAPTLLLVRGRRLDDHPDGTRESAFAASIPPRRFPNGGGGGTTENSDEIITFGAFIAQPWRHTHRECFGDDSSVLFQLGPVHDVFRASTMNRDYAGFVKPTGSGSSNHHGGIMFGCPAPSPSKASSATGALVALGSVSLFLDSSFEFGVFTHDHTSRGGAYAGSTSRPRNFQERFAVNCLEVWGCGGDEESKRQAERWAWEAREAEARRKINLGTGDLEADRALLEMAGLVGQNRSGGSMI.

Positions 307-318 (KPTGSEEDRGEQ) are enriched in basic and acidic residues. 2 disordered regions span residues 307 to 336 (KPTGSEEDRGEQPKLPQKATPSQSTLPQPL) and 406 to 431 (DGTRESAFAASIPPRRFPNGGGGGTT). A compositionally biased stretch (low complexity) spans 326–336 (TPSQSTLPQPL). The TLDc domain maps to 342–574 (SILNANILSQ…VNCLEVWGCG (233 aa)).

It belongs to the RTC5 family.

The protein localises to the cytoplasm. Its function is as follows. May be involved in a process influencing telomere capping. In Pyricularia oryzae (strain 70-15 / ATCC MYA-4617 / FGSC 8958) (Rice blast fungus), this protein is Restriction of telomere capping protein 5 (RTC5).